Consider the following 406-residue polypeptide: Transforming growth factor beta regulator 1 (406 aa).

Disordered stretches follow at residues 1 to 28 and 109 to 144; these read MSVL…PRKS and SSVG…ENSK. S2 bears the N-acetylserine mark. A Phosphothreonine modification is found at T13. Positions 134-144 are enriched in basic and acidic residues; that stretch reads EKKEKGKENSK. The FYR N-terminal domain maps to 177–236; the sequence is VFPIGLGGLTVYSLGEIITNRPGFHDENAIYPVGYCSTRVYASMKCPDQKCLYTCQIKDG. Positions 237 to 316 constitute an FYR C-terminal domain; that stretch reads GVQPQFEIVP…QNCVNYQWVK (80 aa).

The protein belongs to the TBRG1 family. In terms of assembly, interacts with CDKN2A and MDM2. Ubiquitinated; mediated by MDM2 and leading to its subsequent proteasomal degradation.

The protein localises to the nucleus. In terms of biological role, acts as a growth inhibitor. Can activate p53/TP53, causes G1 arrest and collaborates with CDKN2A to restrict proliferation, but does not require either protein to inhibit DNA synthesis. Redistributes CDKN2A into the nucleoplasm. Involved in maintaining chromosomal stability. This chain is Transforming growth factor beta regulator 1 (Tbrg1), found in Mus musculus (Mouse).